Reading from the N-terminus, the 518-residue chain is Chromosomal replication initiator protein DnaA (518 aa).

A domain I, interacts with DnaA modulators region spans residues 1 to 72 (MTLAEFWPLC…VREELAAGRS (72 aa)). Residues 72–180 (SAFVFKPGEG…DAEEARYEQT (109 aa)) are domain II. The domain III, AAA+ region stretch occupies residues 181–397 (NLSPDYTFDT…GAFNRVGASS (217 aa)). The ATP site is built by Gly225, Gly227, Lys228, and Thr229. The segment at 398–518 (RFMNRPVIDI…YEKLLILIQN (121 aa)) is domain IV, binds dsDNA.

The protein belongs to the DnaA family. Oligomerizes as a right-handed, spiral filament on DNA at oriC.

The protein resides in the cytoplasm. Functionally, plays an essential role in the initiation and regulation of chromosomal replication. ATP-DnaA binds to the origin of replication (oriC) to initiate formation of the DNA replication initiation complex once per cell cycle. Binds the DnaA box (a 9 base pair repeat at the origin) and separates the double-stranded (ds)DNA. Forms a right-handed helical filament on oriC DNA; dsDNA binds to the exterior of the filament while single-stranded (ss)DNA is stabiized in the filament's interior. The ATP-DnaA-oriC complex binds and stabilizes one strand of the AT-rich DNA unwinding element (DUE), permitting loading of DNA polymerase. After initiation quickly degrades to an ADP-DnaA complex that is not apt for DNA replication. Binds acidic phospholipids. This is Chromosomal replication initiator protein DnaA from Neisseria meningitidis serogroup C / serotype 2a (strain ATCC 700532 / DSM 15464 / FAM18).